Consider the following 573-residue polypeptide: ESX-1 secretion system protein EccA1 (573 aa).

ATP is bound at residue Gly-334 to Thr-341.

Belongs to the CbxX/CfxQ family. As to quaternary structure, part of the ESX-1 / type VII secretion system (T7SS), which is composed of cytosolic and membrane components.

Its subcellular location is the cytoplasm. Part of the ESX-1 / type VII specialized secretion system (T7SS), which exports several proteins including EsxA and EsxB. EccA1 exhibits ATPase activity and may provide energy for the export of ESX-1 substrates. This Mycobacterium leprae (strain TN) protein is ESX-1 secretion system protein EccA1.